An 880-amino-acid polypeptide reads, in one-letter code: MICHVLVIFTILVSAVVDATASYEPTDVFLINCGDTSNNMDYSGRNWTTENPKFMSSNAVDDASFTSSASYQESGIPQVPYLKARIFRYDFTYSFPVSPGWKFLRLYFYPTRYGSDFDAVKSFFSVNVNRFTLLHNFSVKASIPESSSLIKEFIVPVNQTLDLTFTPSPNSLAFVNGIEIISMPDRFYSKGGFDDVVRNVGRDVDFEIDNSTAFETVYRVNVGGKVVGDVGDSGMFRRWLSDEGFLLGINSGAIPNITGVKINYTDKTPAYVAPEDVYTTCRLMGNKDSPELNLNFNLTWLFEVDAGFAYIVRLHFCETQPEVNKTGDRVFSIFFGYQLAMREMDVFRLSGGFRLPMYLDFKVLVDADGTSQRPSLRVDLTPYKEDYPTYYDAILSGVEILKLSNSDGNLAGLNPIPQLSPPPQSITPLKGKGKSSHVLPIIIAVVGSAVALAFFVLVVVLVVMKRKKKSNESSVDTTNKPSTNSSWGPLLHGTGSTNTKSASSLPSDLCRRFSIYEIKSATNDFEEKLIIGVGGFGSVYKGRIDGGATLVAVKRLEITSNQGAKEFDTELEMLSKLRHVHLVSLIGYCDDDNEMVLVYEYMPHGTLKDHLFRRDKASDPPLSWKRRLEICIGAARGLQYLHTGAKYTIIHRDIKTTNILLDENFVAKVSDFGLSRVGPTSASQTHVSTVVKGTFGYLDPEYYRRQILTEKSDVYSFGVVLLEVLCCRPIRMQSVPPEQADLIRWVKSNFNKRTVDQIIDSDLTADITSTSMEKFCEIAIRCVQDRGMERPPMNDVVWALEFALQLHETAKKKNDNVESLDLMPSGEVGTTTDGEDDLFSRTTGHVGKSTTTDDSVLVVGDERSGSSWGVFSEINEPKAR.

The N-terminal stretch at 1–21 (MICHVLVIFTILVSAVVDATA) is a signal peptide. Residues 22–440 (SYEPTDVFLI…GKGKSSHVLP (419 aa)) are Extracellular-facing. N-linked (GlcNAc...) asparagine glycosylation is found at N46, N136, N158, N210, N256, N263, N297, and N324. Residues 441–461 (IIIAVVGSAVALAFFVLVVVL) form a helical membrane-spanning segment. Residues 462–880 (VVMKRKKKSN…FSEINEPKAR (419 aa)) are Cytoplasmic-facing. The tract at residues 471-505 (NESSVDTTNKPSTNSSWGPLLHGTGSTNTKSASSL) is disordered. 2 stretches are compositionally biased toward polar residues: residues 472–487 (ESSV…NSSW) and 494–505 (TGSTNTKSASSL). The region spanning 525–810 (FEEKLIIGVG…EFALQLHETA (286 aa)) is the Protein kinase domain. ATP is bound by residues 531–539 (IGVGGFGSV) and K554. The active-site Proton acceptor is D653. The tract at residues 820-846 (LDLMPSGEVGTTTDGEDDLFSRTTGHV) is disordered.

The protein belongs to the protein kinase superfamily. Ser/Thr protein kinase family.

Its subcellular location is the membrane. The protein is Probable receptor-like protein kinase At5g38990 of Arabidopsis thaliana (Mouse-ear cress).